A 76-amino-acid polypeptide reads, in one-letter code: Kappa-actitoxin-Avd4c (76 aa).

The signal sequence occupies residues 1-19 (MNKALFLCLVVLCAAVVFA). The propeptide occupies 20–31 (AEDLQKAKHAPF). Intrachain disulfides connect Cys37–Cys72, Cys39–Cys65, and Cys55–Cys73.

The protein belongs to the sea anemone type 3 (BDS) potassium channel toxin family. As to expression, moderately expressed in the ectodermal tissue from the distal and proximal tentacles, body wall, and oral disk.

It is found in the secreted. It localises to the nematocyst. Functionally, blocks Kv3 voltage-gated potassium channels. Reduces blood pressure. The chain is Kappa-actitoxin-Avd4c from Anemonia viridis (Snakelocks anemone).